The chain runs to 128 residues: Large ribosomal subunit protein bL20c (128 aa).

The protein belongs to the bacterial ribosomal protein bL20 family.

It is found in the plastid. It localises to the chloroplast. Its function is as follows. Binds directly to 23S ribosomal RNA and is necessary for the in vitro assembly process of the 50S ribosomal subunit. It is not involved in the protein synthesizing functions of that subunit. The chain is Large ribosomal subunit protein bL20c from Gossypium barbadense (Sea Island cotton).